The primary structure comprises 584 residues: Transcription factor COE1 (584 aa).

The residue at position 1 (M1) is an N-acetylmethionine. The segment covering 1 to 14 (MFGIQESIQRSGSS) has biased composition (polar residues). A disordered region spans residues 1-21 (MFGIQESIQRSGSSMKEEPLG). K16 participates in a covalent cross-link: Glycyl lysine isopeptide (Lys-Gly) (interchain with G-Cter in SUMO1); alternate. A Glycyl lysine isopeptide (Lys-Gly) (interchain with G-Cter in SUMO2); alternate cross-link involves residue K16. The interval 63-66 (RKSN) is interaction with DNA. A C5-type zinc finger spans residues 151 to 170 (CRVLLTHEIMCSRCCDKKSC). 2 interaction with DNA regions span residues 197 to 204 (NCLKNAGN) and 236 to 239 (NNSK). In terms of domain architecture, IPT/TIG spans 255–338 (PCIKAISPSE…KGTPGRFIYT (84 aa)). The interval 450-473 (GFTRNSSSVSPHGYVPSTTPQQTN) is disordered.

It belongs to the COE family. As to quaternary structure, homodimer. Interacts with ZNF423 and ZNF521, leading to prevent EBF1 to bind DNA and activate target genes. Interacts with CCR4-NOT component CNOT3. Expressed exclusively in olfactory receptor neurons and their precursors.

It localises to the nucleus. In terms of biological role, key pioneer transcription factor of B-cell specification and commitment. Recognizes variations of the palindromic sequence 5'-ATTCCCNNGGGAATT-3'. Operates in a transcription factor network to activate B-cell-specific genes and repress genes associated with alternative cell fates. For instance, positively regulates many B-cell specific genes including BCR or CD40 while repressing genes that direct cells into alternative lineages, including GATA3 and TCF7 for the T-cell lineage. In addition to its role during lymphopoiesis, controls the thermogenic gene program in adipocytes during development and in response to environmental cold. The polypeptide is Transcription factor COE1 (Ebf1) (Rattus norvegicus (Rat)).